The sequence spans 294 residues: Protoheme IX farnesyltransferase (294 aa).

The next 8 helical transmembrane spans lie at 19–39 (PKQT…AGGM), 41–61 (LDAL…TTSV), 89–109 (VEAL…SYLI), 111–131 (PWTA…YTMW), 138–158 (LSII…WAAA), 166–186 (AIMI…YISI), 218–238 (VLMI…PIFL), and 272–292 (SPVE…RILW).

It belongs to the UbiA prenyltransferase family. Protoheme IX farnesyltransferase subfamily.

Its subcellular location is the cell membrane. The catalysed reaction is heme b + (2E,6E)-farnesyl diphosphate + H2O = Fe(II)-heme o + diphosphate. Its pathway is porphyrin-containing compound metabolism; heme O biosynthesis; heme O from protoheme: step 1/1. Converts heme B (protoheme IX) to heme O by substitution of the vinyl group on carbon 2 of heme B porphyrin ring with a hydroxyethyl farnesyl side group. The chain is Protoheme IX farnesyltransferase from Korarchaeum cryptofilum (strain OPF8).